A 359-amino-acid polypeptide reads, in one-letter code: DNA integrity scanning protein DisA (359 aa).

The DAC domain maps to 7 to 146 (DDIFRATLAA…GRRYVLDGSA (140 aa)). ATP-binding positions include Gly74, Leu92, and 105–109 (TRHRT).

The protein belongs to the DisA family. In terms of assembly, homooctamer. Mg(2+) is required as a cofactor.

It catalyses the reaction 2 ATP = 3',3'-c-di-AMP + 2 diphosphate. In terms of biological role, participates in a DNA-damage check-point that is active prior to asymmetric division when DNA is damaged. DisA forms globular foci that rapidly scan along the chromosomes during sporulation, searching for lesions. When a lesion is present, DisA pauses at the lesion site. This triggers a cellular response that culminates in a temporary block in sporulation initiation. Its function is as follows. Also has diadenylate cyclase activity, catalyzing the condensation of 2 ATP molecules into cyclic di-AMP (c-di-AMP). c-di-AMP acts as a signaling molecule that couples DNA integrity with progression of sporulation. The rise in c-di-AMP level generated by DisA while scanning the chromosome, operates as a positive signal that advances sporulation; upon encountering a lesion, the DisA focus arrests at the damaged site and halts c-di-AMP synthesis. The protein is DNA integrity scanning protein DisA of Frankia casuarinae (strain DSM 45818 / CECT 9043 / HFP020203 / CcI3).